We begin with the raw amino-acid sequence, 140 residues long: Cytochrome B5 isoform D (140 aa).

A Cytochrome b5 heme-binding domain is found at 5–81 (GKVFTLSEVS…LDEYYVGDID (77 aa)). Residues His40 and His64 each contribute to the heme site. A helical membrane pass occupies residues 109–129 (FVIKLLQFLVPLLILGLAFGI).

This sequence belongs to the cytochrome b5 family. Interacts with CER1, BI-1, FAH1 and FAH2. In terms of tissue distribution, expressed in roots, stems, leaves, flowers and siliques.

Its subcellular location is the endoplasmic reticulum membrane. Its function is as follows. Membrane bound hemoprotein which function as an electron carrier for several membrane bound oxygenases, including fatty acid desaturases. The sequence is that of Cytochrome B5 isoform D from Arabidopsis thaliana (Mouse-ear cress).